The primary structure comprises 301 residues: Probable 5-dehydro-4-deoxyglucarate dehydratase (301 aa).

The protein belongs to the DapA family.

It catalyses the reaction 5-dehydro-4-deoxy-D-glucarate + H(+) = 2,5-dioxopentanoate + CO2 + H2O. It participates in carbohydrate acid metabolism; D-glucarate degradation; 2,5-dioxopentanoate from D-glucarate: step 2/2. This chain is Probable 5-dehydro-4-deoxyglucarate dehydratase, found in Chelativorans sp. (strain BNC1).